Here is a 294-residue protein sequence, read N- to C-terminus: ATP synthase gamma chain (294 aa).

This sequence belongs to the ATPase gamma chain family. F-type ATPases have 2 components, CF(1) - the catalytic core - and CF(0) - the membrane proton channel. CF(1) has five subunits: alpha(3), beta(3), gamma(1), delta(1), epsilon(1). CF(0) has three main subunits: a, b and c.

It is found in the cell inner membrane. Produces ATP from ADP in the presence of a proton gradient across the membrane. The gamma chain is believed to be important in regulating ATPase activity and the flow of protons through the CF(0) complex. This Campylobacter jejuni subsp. jejuni serotype O:6 (strain 81116 / NCTC 11828) protein is ATP synthase gamma chain.